Reading from the N-terminus, the 1154-residue chain is Large proline-rich protein BAG6 (1154 aa).

The residue at position 1 (Met-1) is an N-acetylmethionine. Residues 17–92 (LEVLVKTLDS…HLVERAPPQT (76 aa)) form the Ubiquitin-like domain. Disordered regions lie at residues 87–125 (RAPP…ASVH), 186–274 (RGGT…HPSP), 387–442 (TMTG…SSHP), 463–531 (QDSG…QGAG), and 568–626 (AQAQ…SAAD). Residue Ser-96 is modified to Phosphoserine. Over residues 96 to 112 (SGASSGTGSASATHGGA) the composition is skewed to low complexity. The residue at position 117 (Thr-117) is a Phosphothreonine. Polar residues predominate over residues 209-218 (VALNSQTSEP). Repeat unit 1 spans residues 237 to 271 (RPPTQTPELAPSGPAPAGPAPAGPAPAPETNAPNH). Residues 237 to 658 (RPPTQTPELA…MASPTITVAM (422 aa)) are 4 X 29 AA approximate repeats. Residues 249 to 263 (GPAPAGPAPAGPAPA) are compositionally biased toward pro residues. Positions 400–409 (GAEAATPGSA) are enriched in low complexity. Residues 410–426 (QATSLPPSSTTVDSSTE) show a composition bias toward polar residues. Copy 2 of the repeat occupies 416–444 (PSSTTVDSSTEGAPPPGPAPPPASSHPRV). 2 stretches are compositionally biased toward pro residues: residues 428 to 439 (APPPGPAPPPAS) and 508 to 521 (PTPP…PGGP). Low complexity-rich tracts occupy residues 568 to 581 (AQAQ…AQAP) and 591 to 609 (PATA…TAGP). 2 repeat units span residues 597-624 (SAGT…QPSA) and 630-658 (SQLL…TVAM). Pro residues predominate over residues 611-622 (PGGPAQPPPPQP). Disordered stretches follow at residues 673-719 (QASQ…ESLP) and 968-1154 (PPQT…ADDP). Pro residues predominate over residues 678 to 702 (APPPPPPPPPPPPAPEQQSTPPPGS). Phosphoserine is present on residues Ser-986 and Ser-995. A compositionally biased stretch (low complexity) spans 1029–1042 (AEPWAAAVPPEWVP). A required for interaction with GET4 region spans residues 1032–1062 (WAAAVPPEWVPIIQQDIQSQRKVKPQPPLSD). The short motif at 1034 to 1076 (AAVPPEWVPIIQQDIQSQRKVKPQPPLSDAYLSGMPAKRRKTM) is the Nuclear localization site element. The interval 1044 to 1154 (IQQDIQSQRK…NAHRAFADDP (111 aa)) is sufficient for the delivery of client proteins to the endoplasmic reticulum. At Thr-1075 the chain carries Phosphothreonine. The segment at 1080–1137 (GPQLLLSEAVSRAAKAAGARPLTSPESLSRDLEAPEVQESYRQQLRSDIQKRLQEDPN) is BAG-similar domain, required and sufficient for interaction with UBL4A. Over residues 1088–1098 (AVSRAAKAAGA) the composition is skewed to low complexity. 2 positions are modified to phosphoserine: Ser-1103 and Ser-1139.

As to quaternary structure, component of the BAG6/BAT3 complex, also named BAT3 complex, at least composed of BAG6, UBL4A and GET4/TRC35. Interacts with GET4; the interaction is direct and localizes BAG6 in the cytosol. Interacts with UBL4A; the interaction is direct and required for UBL4A protein stability. Interacts with AIFM1. Interacts with HSPA2. Interacts with CTCFL. Interacts with p300/EP300. Interacts (via ubiquitin-like domain) with RNF126; required for BAG6-dependent ubiquitination of proteins mislocalized to the cytosol. Interacts (via ubiquitin-like domain) with SGTA; SGTA competes with RNF126 by binding the same region of BAG6, thereby promoting deubiquitination of BAG6-target proteins and rescuing them from degradation. Interacts with ricin A chain. Interacts with VCP and AMFR; both form the VCP/p97-AMFR/gp78 complex. Interacts with SYVN1. Interacts with USP13; the interaction is direct and may mediate UBL4A deubiquitination. Interacts with ZFAND2B. Interacts with KPNA2. Interacts with UBQLN4. Post-translationally, ricin can induce a cleavage by the caspase CASP3. The released C-terminal peptide induces apoptosis.

It is found in the cytoplasm. It localises to the cytosol. The protein resides in the nucleus. The protein localises to the secreted. Its subcellular location is the extracellular exosome. Its function is as follows. ATP-independent molecular chaperone preventing the aggregation of misfolded and hydrophobic patches-containing proteins. Functions as part of a cytosolic protein quality control complex, the BAG6/BAT3 complex, which maintains these client proteins in a soluble state and participates in their proper delivery to the endoplasmic reticulum or alternatively can promote their sorting to the proteasome where they undergo degradation. The BAG6/BAT3 complex is involved in the post-translational delivery of tail-anchored/type II transmembrane proteins to the endoplasmic reticulum membrane. Recruited to ribosomes, it interacts with the transmembrane region of newly synthesized tail-anchored proteins and together with SGTA and ASNA1 mediates their delivery to the endoplasmic reticulum. Client proteins that cannot be properly delivered to the endoplasmic reticulum are ubiquitinated by RNF126, an E3 ubiquitin-protein ligase associated with BAG6 and are sorted to the proteasome. SGTA which prevents the recruitment of RNF126 to BAG6 may negatively regulate the ubiquitination and the proteasomal degradation of client proteins. Similarly, the BAG6/BAT3 complex also functions as a sorting platform for proteins of the secretory pathway that are mislocalized to the cytosol either delivering them to the proteasome for degradation or to the endoplasmic reticulum. The BAG6/BAT3 complex also plays a role in the endoplasmic reticulum-associated degradation (ERAD), a quality control mechanism that eliminates unwanted proteins of the endoplasmic reticulum through their retrotranslocation to the cytosol and their targeting to the proteasome. It maintains these retrotranslocated proteins in an unfolded yet soluble state condition in the cytosol to ensure their proper delivery to the proteasome. BAG6 is also required for selective ubiquitin-mediated degradation of defective nascent chain polypeptides by the proteasome. In this context, it may participate in the production of antigenic peptides and play a role in antigen presentation in immune response. BAG6 is also involved in endoplasmic reticulum stress-induced pre-emptive quality control, a mechanism that selectively attenuates the translocation of newly synthesized proteins into the endoplasmic reticulum and reroutes them to the cytosol for proteasomal degradation. BAG6 may ensure the proper degradation of these proteins and thereby protects the endoplasmic reticulum from protein overload upon stress. By inhibiting the polyubiquitination and subsequent proteasomal degradation of HSPA2 it may also play a role in the assembly of the synaptonemal complex during spermatogenesis. Also positively regulates apoptosis by interacting with and stabilizing the proapoptotic factor AIFM1. By controlling the steady-state expression of the IGF1R receptor, indirectly regulates the insulin-like growth factor receptor signaling pathway. In terms of biological role, involved in DNA damage-induced apoptosis: following DNA damage, accumulates in the nucleus and forms a complex with p300/EP300, enhancing p300/EP300-mediated p53/TP53 acetylation leading to increase p53/TP53 transcriptional activity. When nuclear, may also act as a component of some chromatin regulator complex that regulates histone 3 'Lys-4' dimethylation (H3K4me2). Released extracellularly via exosomes, it is a ligand of the natural killer/NK cells receptor NCR3 and stimulates NK cells cytotoxicity. It may thereby trigger NK cells cytotoxicity against neighboring tumor cells and immature myeloid dendritic cells (DC). Functionally, may mediate ricin-induced apoptosis. This Mus musculus (Mouse) protein is Large proline-rich protein BAG6.